The primary structure comprises 264 residues: Thymidylate synthase (264 aa).

Residue Arg21 participates in dUMP binding. (6R)-5,10-methylene-5,6,7,8-tetrahydrofolate is bound at residue His51. A dUMP-binding site is contributed by 126-127 (RR). The Nucleophile role is filled by Cys146. Residues 166–169 (RSAD), Asn177, and 207–209 (HLY) each bind dUMP. Asp169 contacts (6R)-5,10-methylene-5,6,7,8-tetrahydrofolate. Position 263 (Ala263) interacts with (6R)-5,10-methylene-5,6,7,8-tetrahydrofolate.

Belongs to the thymidylate synthase family. Bacterial-type ThyA subfamily. Homodimer.

The protein localises to the cytoplasm. The enzyme catalyses dUMP + (6R)-5,10-methylene-5,6,7,8-tetrahydrofolate = 7,8-dihydrofolate + dTMP. It participates in pyrimidine metabolism; dTTP biosynthesis. Catalyzes the reductive methylation of 2'-deoxyuridine-5'-monophosphate (dUMP) to 2'-deoxythymidine-5'-monophosphate (dTMP) while utilizing 5,10-methylenetetrahydrofolate (mTHF) as the methyl donor and reductant in the reaction, yielding dihydrofolate (DHF) as a by-product. This enzymatic reaction provides an intracellular de novo source of dTMP, an essential precursor for DNA biosynthesis. The sequence is that of Thymidylate synthase from Mesorhizobium japonicum (strain LMG 29417 / CECT 9101 / MAFF 303099) (Mesorhizobium loti (strain MAFF 303099)).